An 80-amino-acid chain; its full sequence is RNA-binding protein Hfq (80 aa).

The 60-residue stretch at 10–69 (DPFLNVLRKEHIPVSIYLVNGIKLQGHIDSFDQYVVLLRNSVTQMVYKHAISTIVPGKAV) folds into the Sm domain.

It belongs to the Hfq family. In terms of assembly, homohexamer.

RNA chaperone that binds small regulatory RNA (sRNAs) and mRNAs to facilitate mRNA translational regulation in response to envelope stress, environmental stress and changes in metabolite concentrations. Also binds with high specificity to tRNAs. The polypeptide is RNA-binding protein Hfq (Nitrosomonas eutropha (strain DSM 101675 / C91 / Nm57)).